We begin with the raw amino-acid sequence, 176 residues long: Protein CURLY FLAG LEAF 2 (176 aa).

An EAR motif is present at residues 41-46; the sequence is FLELSS. The WW domain occupies 48-82; the sequence is FSVPSHLEQCLDLKTGEIYYRSWNSGMRVKEDPRK. Disordered stretches follow at residues 77-106 and 111-130; these read KEDP…SSEE and YESE…YHKE. Residues 93-106 are compositionally biased toward low complexity; it reads SSGESSGTVFSSEE.

As to quaternary structure, may interact with BHLH122/CFLAP1 and BHLH80/CFLAP2.

In terms of biological role, may negatively regulate the cuticle development by interacting with the HD-ZIP IV transcription factor HDG1. In Arabidopsis thaliana (Mouse-ear cress), this protein is Protein CURLY FLAG LEAF 2.